The primary structure comprises 878 residues: Protein translocase subunit SecA (878 aa).

ATP contacts are provided by residues glutamine 81, 99–103 (GEGKT), and aspartate 489.

The protein belongs to the SecA family.

The protein resides in the plastid. It is found in the chloroplast stroma. Its subcellular location is the chloroplast thylakoid membrane. The enzyme catalyses ATP + H2O + cellular proteinSide 1 = ADP + phosphate + cellular proteinSide 2.. In terms of biological role, has a central role in coupling the hydrolysis of ATP to the transfer of proteins across the thylakoid membrane. The polypeptide is Protein translocase subunit SecA (Thalassiosira pseudonana (Marine diatom)).